Consider the following 410-residue polypeptide: Protein translocase subunit SecY (410 aa).

The next 9 membrane-spanning stretches (helical) occupy residues 61-81 (LSVF…IQIL), 106-126 (ITKY…VLRL), 135-155 (LYFI…VMWL), 170-190 (VIIF…QLFV), 195-215 (FLDF…IVFV), 248-268 (QGGV…DYVI), 289-309 (ILFL…YCSL), 349-369 (LFGS…EFVF), and 373-393 (VFKG…IDLI).

The protein belongs to the SecY/SEC61-alpha family. Component of the plastid Sec protein translocase complex, which is composed of at least SecY and SecE.

It is found in the plastid. The protein localises to the chloroplast thylakoid membrane. The central subunit of the protein translocation channel SecYE. Consists of two halves formed by TMs 1-5 and 6-10. These two domains form a lateral gate at the front which open onto the bilayer between TMs 2 and 7, and are clamped together by SecE at the back. The channel is closed by both a pore ring composed of hydrophobic SecY resides and a short helix (helix 2A) on the extracellular side of the membrane which forms a plug. The chain is Protein translocase subunit SecY from Cyanidium caldarium (Red alga).